The primary structure comprises 311 residues: Probable lipid kinase YegS-like (311 aa).

The 132-residue stretch at 9 to 140 (EHDGDTWLIL…VDVGTLGDDY (132 aa)) folds into the DAGKc domain. Residues threonine 47, 73–79 (GDGTVNE), and serine 102 contribute to the ATP site. Mg(2+)-binding residues include lysine 221, aspartate 224, and leucine 226. Glutamate 281 (proton acceptor) is an active-site residue.

The protein belongs to the diacylglycerol/lipid kinase family. YegS lipid kinase subfamily. Requires Mg(2+) as cofactor. The cofactor is Ca(2+).

The protein localises to the cytoplasm. Functionally, probably phosphorylates lipids; the in vivo substrate is unknown. This is Probable lipid kinase YegS-like from Chromohalobacter salexigens (strain ATCC BAA-138 / DSM 3043 / CIP 106854 / NCIMB 13768 / 1H11).